The sequence spans 91 residues: Probable Fe(2+)-trafficking protein (91 aa).

Belongs to the Fe(2+)-trafficking protein family. In terms of assembly, monomer.

In terms of biological role, could be a mediator in iron transactions between iron acquisition and iron-requiring processes, such as synthesis and/or repair of Fe-S clusters in biosynthetic enzymes. The protein is Probable Fe(2+)-trafficking protein of Escherichia coli O7:K1 (strain IAI39 / ExPEC).